The following is a 296-amino-acid chain: Nitrogenase iron protein (296 aa).

11 to 18 lines the ATP pocket; that stretch reads GKGGIGKS. Cysteine 99 is a [4Fe-4S] cluster binding site. The residue at position 102 (arginine 102) is an ADP-ribosylarginine; by dinitrogenase reductase ADP-ribosyltransferase. Position 134 (cysteine 134) interacts with [4Fe-4S] cluster.

The protein belongs to the NifH/BchL/ChlL family. Homodimer. Requires [4Fe-4S] cluster as cofactor. In terms of processing, the reversible ADP-ribosylation of Arg-102 inactivates the nitrogenase reductase and regulates nitrogenase activity.

It catalyses the reaction N2 + 8 reduced [2Fe-2S]-[ferredoxin] + 16 ATP + 16 H2O = H2 + 8 oxidized [2Fe-2S]-[ferredoxin] + 2 NH4(+) + 16 ADP + 16 phosphate + 6 H(+). Its function is as follows. The key enzymatic reactions in nitrogen fixation are catalyzed by the nitrogenase complex, which has 2 components: the iron protein and the molybdenum-iron protein. The protein is Nitrogenase iron protein of Dechloromonas aromatica (strain RCB).